Consider the following 262-residue polypeptide: Homeobox-leucine zipper protein HOX24 (262 aa).

Disordered regions lie at residues alanine 44–arginine 68 and leucine 162–methionine 189. Residues glycine 46–glycine 62 are compositionally biased toward gly residues. A DNA-binding region (homeobox) is located at residues glycine 61–glutamine 122. A leucine-zipper region spans residues lysine 121–arginine 165.

This sequence belongs to the HD-ZIP homeobox family. Class I subfamily. In terms of tissue distribution, expressed in roots and panicles.

It localises to the nucleus. Functionally, probable transcription factor. This chain is Homeobox-leucine zipper protein HOX24 (HOX24), found in Oryza sativa subsp. indica (Rice).